The chain runs to 370 residues: Homoserine kinase (370 aa).

The transit peptide at 1–34 directs the protein to the chloroplast; it reads MASLCFQSPSKPISYFQPKSNPSPPLFAKVSVFR. 143–154 contributes to the ATP binding site; sequence LPLGSGLGSSAA.

This sequence belongs to the GHMP kinase family. Homoserine kinase subfamily.

The protein localises to the plastid. The protein resides in the chloroplast stroma. The catalysed reaction is L-homoserine + ATP = O-phospho-L-homoserine + ADP + H(+). Its pathway is amino-acid biosynthesis; L-threonine biosynthesis; L-threonine from L-aspartate: step 4/5. In terms of biological role, catalyzes the ATP-dependent phosphorylation of L-homoserine to L-homoserine phosphate. Is specific for L-homoserine and cannot use other substrates such D-serine, L-serine, D-threonine and L-threonine, galactose or D-homoserine in vitro. Required for susceptibility to the downy mildew pathogen Hyaloperonospora parasitica. The protein is Homoserine kinase (HSK) of Arabidopsis thaliana (Mouse-ear cress).